Consider the following 246-residue polypeptide: Large ribosomal subunit protein uL3 (246 aa).

2 disordered regions span residues Ser140–Met162 and Asp215–Ala246. Gln151 bears the N5-methylglutamine mark. A compositionally biased stretch (low complexity) spans Glu234–Ala246.

Belongs to the universal ribosomal protein uL3 family. Part of the 50S ribosomal subunit. Forms a cluster with proteins L14 and L19. Post-translationally, methylated by PrmB.

Functionally, one of the primary rRNA binding proteins, it binds directly near the 3'-end of the 23S rRNA, where it nucleates assembly of the 50S subunit. The polypeptide is Large ribosomal subunit protein uL3 (Methylorubrum extorquens (strain PA1) (Methylobacterium extorquens)).